The sequence spans 51 residues: ATP synthase F(1) complex subunit epsilon, mitochondrial (51 aa).

N6-acetyllysine; alternate occurs at positions 21, 32, and 37. An N6-succinyllysine; alternate mark is found at K21, K32, and K37. K44 is subject to N6-acetyllysine.

The protein belongs to the eukaryotic ATPase epsilon family. In terms of assembly, component of the ATP synthase complex composed at least of ATP5F1A/subunit alpha, ATP5F1B/subunit beta, ATP5MC1/subunit c (homooctomer), MT-ATP6/subunit a, MT-ATP8/subunit 8, ATP5ME/subunit e, ATP5MF/subunit f, ATP5MG/subunit g, ATP5MK/subunit k, ATP5MJ/subunit j, ATP5F1C/subunit gamma, ATP5F1D/subunit delta, ATP5F1E/subunit epsilon, ATP5PF/subunit F6, ATP5PB/subunit b, ATP5PD/subunit d, ATP5PO/subunit OSCP. ATP synthase complex consists of a soluble F(1) head domain (subunits alpha(3) and beta(3)) - the catalytic core - and a membrane F(0) domain - the membrane proton channel (subunits c, a, 8, e, f, g, k and j). These two domains are linked by a central stalk (subunits gamma, delta, and epsilon) rotating inside the F1 region and a stationary peripheral stalk (subunits F6, b, d, and OSCP).

The protein localises to the mitochondrion. It localises to the mitochondrion inner membrane. Subunit epsilon, of the mitochondrial membrane ATP synthase complex (F(1)F(0) ATP synthase or Complex V) that produces ATP from ADP in the presence of a proton gradient across the membrane which is generated by electron transport complexes of the respiratory chain. ATP synthase complex consist of a soluble F(1) head domain - the catalytic core - and a membrane F(1) domain - the membrane proton channel. These two domains are linked by a central stalk rotating inside the F(1) region and a stationary peripheral stalk. During catalysis, ATP synthesis in the catalytic domain of F(1) is coupled via a rotary mechanism of the central stalk subunits to proton translocation. In vivo, can only synthesize ATP although its ATP hydrolase activity can be activated artificially in vitro. May be essential for the assembly of F(1) and may play an important role in the incorporation of the hydrophobic subunit c into the F(1)-c oligomer rotor of the mitochondrial ATP synthase complex. This is ATP synthase F(1) complex subunit epsilon, mitochondrial from Bos taurus (Bovine).